The chain runs to 206 residues: Large ribosomal subunit protein uL4 (206 aa).

Residues 43-52 (NKRQGTQSAK) are compositionally biased toward polar residues. The segment at 43-86 (NKRQGTQSAKTRAEVSGGGRKPWRQKGTGHARQGSTRSPQWKGG) is disordered.

This sequence belongs to the universal ribosomal protein uL4 family. In terms of assembly, part of the 50S ribosomal subunit.

One of the primary rRNA binding proteins, this protein initially binds near the 5'-end of the 23S rRNA. It is important during the early stages of 50S assembly. It makes multiple contacts with different domains of the 23S rRNA in the assembled 50S subunit and ribosome. Functionally, forms part of the polypeptide exit tunnel. This Lachnoclostridium phytofermentans (strain ATCC 700394 / DSM 18823 / ISDg) (Clostridium phytofermentans) protein is Large ribosomal subunit protein uL4.